Consider the following 132-residue polypeptide: Small ribosomal subunit protein uS9 (132 aa).

The protein belongs to the universal ribosomal protein uS9 family.

The polypeptide is Small ribosomal subunit protein uS9 (Leptospira borgpetersenii serovar Hardjo-bovis (strain JB197)).